Here is a 456-residue protein sequence, read N- to C-terminus: tRNA modification GTPase MnmE (456 aa).

Arg24, Glu81, and Lys120 together coordinate (6S)-5-formyl-5,6,7,8-tetrahydrofolate. The TrmE-type G domain occupies 216 to 379 (GMTVVIAGRP…LRDHLKACMG (164 aa)). Asn226 serves as a coordination point for K(+). Residues 226–231 (NAGKSS), 245–251 (TEIAGTT), 270–273 (DTAG), and 335–338 (NKAD) contribute to the GTP site. Ser230 contacts Mg(2+). The K(+) site is built by Thr245, Ile247, and Thr250. Position 251 (Thr251) interacts with Mg(2+). Lys456 contacts (6S)-5-formyl-5,6,7,8-tetrahydrofolate.

Belongs to the TRAFAC class TrmE-Era-EngA-EngB-Septin-like GTPase superfamily. TrmE GTPase family. In terms of assembly, homodimer. Heterotetramer of two MnmE and two MnmG subunits. K(+) serves as cofactor.

It is found in the cytoplasm. In terms of biological role, exhibits a very high intrinsic GTPase hydrolysis rate. Involved in the addition of a carboxymethylaminomethyl (cmnm) group at the wobble position (U34) of certain tRNAs, forming tRNA-cmnm(5)s(2)U34. This chain is tRNA modification GTPase MnmE, found in Pseudomonas fluorescens (strain Pf0-1).